The primary structure comprises 136 residues: ATP synthase epsilon chain (136 aa).

The protein belongs to the ATPase epsilon chain family. As to quaternary structure, F-type ATPases have 2 components, CF(1) - the catalytic core - and CF(0) - the membrane proton channel. CF(1) has five subunits: alpha(3), beta(3), gamma(1), delta(1), epsilon(1). CF(0) has three main subunits: a, b and c.

It is found in the cellular thylakoid membrane. Produces ATP from ADP in the presence of a proton gradient across the membrane. This chain is ATP synthase epsilon chain, found in Parasynechococcus marenigrum (strain WH8102).